Reading from the N-terminus, the 412-residue chain is Cinnamoyl-CoA:phenyllactate CoA-transferase (412 aa).

Asparagine 102 is a CoA binding site. The active-site Nucleophile is the aspartate 176.

In terms of assembly, homodimer. Part of the heterotrimeric phenyllactate dehydratase complex FldABC, composed of (R)-phenyllactate CoA-transferase (FldA) and a heterodimeric (R)-phenyllactyl-CoA dehydratase (FldB and FldC).

It carries out the reaction (E)-cinnamoyl-CoA + (R)-3-phenyllactate = (R)-3-phenyllactoyl-CoA + (E)-cinnamate. It participates in amino-acid degradation; L-phenylalanine degradation. Component of the phenyllactate dehydratase complex FldABC that is involved in the fermentation of L-phenylalanine via a Stickland reaction. This complex catalyzes the reversible syn-dehydration of (R)-phenyllactate to (E)-cinnamate in two steps, a CoA-transfer from cinnamoyl-CoA to phenyllactate, catalyzed by FldA, followed by the dehydration of phenyllactyl-CoA to cinnamoyl-CoA, catalyzed by FldB and FldC. In vitro, FldA can use 3-phenylpropanoate as a better CoA-acceptor than phenyllactate. This is Cinnamoyl-CoA:phenyllactate CoA-transferase from Clostridium sporogenes.